Reading from the N-terminus, the 323-residue chain is Protein MEI2-like 6 (323 aa).

This Oryza sativa subsp. japonica (Rice) protein is Protein MEI2-like 6 (ML6).